Consider the following 656-residue polypeptide: PAN2-PAN3 deadenylation complex subunit pan3 (656 aa).

2 disordered regions span residues 1-24 (MAAT…KNRD) and 75-117 (SFTP…QQAN). A C3H1-type zinc finger spans residues 24–53 (DTKETLCRNVVIYGHCRWEDSGCTFNHDQN). A PABPC-interacting motif-2 (PAM-2) motif is present at residues 63–83 (NSNRRVFNVESPSFTPANQQQ). 2 stretches are compositionally biased toward polar residues: residues 75–96 (SFTP…SQAA) and 107–117 (GTSTPTLQQAN). The pseudokinase domain stretch occupies residues 251–514 (QLLPNSGLPN…TVETLLGGIT (264 aa)). ATP-binding positions include 275 to 280 (TRNSTC), arginine 302, 352 to 359 (DFHPLSET), and 412 to 413 (SK). The stretch at 515 to 553 (THLANFANFVMQESDEKEFHLMRELENGRIARLMFKLSV) forms a coiled coil. The tract at residues 554–656 (VNERGDSCGV…SKPSATGATI (103 aa)) is knob domain.

Belongs to the protein kinase superfamily. PAN3 family. In terms of assembly, homodimer. Forms a heterotrimer with a catalytic subunit par-1/pan2 to form the poly(A)-nuclease (PAN) deadenylation complex. Interacts (via PAM-2 motif) with poly(A)-binding protein pabp-1 (via PABC domain), conferring substrate specificity of the enzyme complex.

The protein localises to the cytoplasm. Functionally, regulatory subunit of the poly(A)-nuclease (PAN) deadenylation complex, one of two cytoplasmic mRNA deadenylases involved in mRNA turnover. PAN specifically shortens poly(A) tails of RNA and the activity is stimulated by poly(A)-binding protein pabp-1. PAN deadenylation is followed by rapid degradation of the shortened mRNA tails by the CCR4-NOT complex. Deadenylated mRNAs are then degraded by two alternative mechanisms, namely exosome-mediated 3'-5' exonucleolytic degradation, or deadenylation-dependent mRNA decaping and subsequent 5'-3' exonucleolytic degradation by rgb-30/xrn1. May also be involved in post-transcriptional maturation of mRNA poly(A) tails. par-2/pan3 acts as a positive regulator for PAN activity, recruiting the catalytic subunit par-1/pan2 to mRNA via its interaction with RNA and with pabp-1. The sequence is that of PAN2-PAN3 deadenylation complex subunit pan3 (par-2) from Neurospora crassa (strain ATCC 24698 / 74-OR23-1A / CBS 708.71 / DSM 1257 / FGSC 987).